Consider the following 200-residue polypeptide: Interferon lambda-2 (200 aa).

Residues 1–25 (MKLDMTGDCTPVLVLMAAVLTVTGA) form the signal peptide.

Belongs to the lambda interferon family.

Its subcellular location is the secreted. Its function is as follows. Cytokine with antiviral, antitumour and immunomodulatory activities. Plays a critical role in the antiviral host defense, predominantly in the epithelial tissues. Acts as a ligand for the heterodimeric class II cytokine receptor composed of IL10RB and IFNLR1, and receptor engagement leads to the activation of the JAK/STAT signaling pathway resulting in the expression of IFN-stimulated genes (ISG), which mediate the antiviral state. Has a restricted receptor distribution and therefore restricted targets: is primarily active in epithelial cells and this cell type-selective action is because of the epithelial cell-specific expression of its receptor IFNLR1. Seems not to be essential for early virus-activated host defense in vaginal infection, but plays an important role in Toll-like receptor (TLR)-induced antiviral defense. Plays a significant role in the antiviral immune defense in the intestinal epithelium. Exerts an immunomodulatory effect by up-regulating MHC class I antigen expression. The protein is Interferon lambda-2 (IFNL2) of Homo sapiens (Human).